A 75-amino-acid polypeptide reads, in one-letter code: Translation initiation factor IF-1, chloroplastic (75 aa).

The protein belongs to the IF-1 family. Component of the 30S ribosomal translation pre-initiation complex which assembles on the 30S ribosome in the order IF-2 and IF-3, IF-1 and N-formylmethionyl-tRNA(fMet); mRNA recruitment can occur at any time during PIC assembly.

It is found in the plastid. The protein resides in the chloroplast. In terms of biological role, one of the essential components for the initiation of protein synthesis. Stabilizes the binding of IF-2 and IF-3 on the 30S subunit to which N-formylmethionyl-tRNA(fMet) subsequently binds. Helps modulate mRNA selection, yielding the 30S pre-initiation complex (PIC). Upon addition of the 50S ribosomal subunit IF-1, IF-2 and IF-3 are released leaving the mature 70S translation initiation complex. In Cucumis sativus (Cucumber), this protein is Translation initiation factor IF-1, chloroplastic (infA).